A 306-amino-acid polypeptide reads, in one-letter code: Glutaminase (306 aa).

Residues serine 64, asparagine 115, glutamate 159, asparagine 166, tyrosine 190, tyrosine 242, and valine 260 each coordinate substrate.

It belongs to the glutaminase family. Homotetramer.

It carries out the reaction L-glutamine + H2O = L-glutamate + NH4(+). The chain is Glutaminase from Photobacterium profundum (strain SS9).